The chain runs to 438 residues: GTPase Der (438 aa).

2 consecutive EngA-type G domains span residues 4–168 and 176–351; these read PVVA…PAGA and VRIA…GEYR. Residues 10–17, 57–61, 120–123, 182–189, 229–233, and 294–297 contribute to the GTP site; these read GRPNVGKS, DTGGI, NKVD, DTAGM, and NKWD. In terms of domain architecture, KH-like spans 352–436; it reads RQIPTSMLNR…PVRILFRRRE (85 aa).

This sequence belongs to the TRAFAC class TrmE-Era-EngA-EngB-Septin-like GTPase superfamily. EngA (Der) GTPase family. As to quaternary structure, associates with the 50S ribosomal subunit.

Its function is as follows. GTPase that plays an essential role in the late steps of ribosome biogenesis. This chain is GTPase Der, found in Desulforudis audaxviator (strain MP104C).